The following is a 328-amino-acid chain: Cytochrome f (328 aa).

Positions 1–44 (MRTFNFLSFPQVHRQALVKAVLVAIATVSLLLTSDVINPQSAQA) are cleaved as a signal peptide. Heme is bound by residues tyrosine 45, cysteine 66, cysteine 69, and histidine 70. Residues 294–314 (IKGLVLFLGGIMLCQILLVIK) form a helical membrane-spanning segment.

The protein belongs to the cytochrome f family. In terms of assembly, the 4 large subunits of the cytochrome b6-f complex are cytochrome b6, subunit IV (17 kDa polypeptide, PetD), cytochrome f and the Rieske protein, while the 4 small subunits are PetG, PetL, PetM and PetN. The complex functions as a dimer. Heme serves as cofactor.

Its subcellular location is the cellular thylakoid membrane. Its function is as follows. Component of the cytochrome b6-f complex, which mediates electron transfer between photosystem II (PSII) and photosystem I (PSI), cyclic electron flow around PSI, and state transitions. This Microcystis aeruginosa (strain NIES-843 / IAM M-2473) protein is Cytochrome f.